The chain runs to 393 residues: Elongation factor Tu (393 aa).

The region spanning 10-203 is the tr-type G domain; the sequence is KPHVNIGTIG…AVDSYIPEPV (194 aa). A G1 region spans residues 19–26; that stretch reads GHVDHGKT. 19 to 26 is a GTP binding site; sequence GHVDHGKT. A Mg(2+)-binding site is contributed by Thr-26. The G2 stretch occupies residues 60–64; sequence GITIS. Residues 81–84 are G3; the sequence is DCPG. GTP is bound by residues 81–85 and 136–139; these read DCPGH and NKVD. The segment at 136 to 139 is G4; the sequence is NKVD. The interval 173-175 is G5; sequence SAL.

Belongs to the TRAFAC class translation factor GTPase superfamily. Classic translation factor GTPase family. EF-Tu/EF-1A subfamily. Monomer.

Its subcellular location is the cytoplasm. It catalyses the reaction GTP + H2O = GDP + phosphate + H(+). Functionally, GTP hydrolase that promotes the GTP-dependent binding of aminoacyl-tRNA to the A-site of ribosomes during protein biosynthesis. The sequence is that of Elongation factor Tu from Prosthecochloris aestuarii (strain DSM 271 / SK 413).